Here is a 450-residue protein sequence, read N- to C-terminus: 3-keto-steroid reductase erg27 (450 aa).

Residues Leu25, Thr53, and Lys59 each contribute to the NADP(+) site. Residues Ser215 and Tyr238 each act as proton donor in the active site. Residues Tyr238, Lys242, and Thr296 each coordinate NADP(+). Lys242 (lowers pKa of active site Tyr) is an active-site residue.

It belongs to the short-chain dehydrogenases/reductases (SDR) family. ERG27 subfamily. Heterotetramer of erg25, erg26, erg27 and erg28. Erg28 acts as a scaffold to tether erg27 and other 4,4-demethylation-related enzymes, forming a demethylation enzyme complex, in the endoplasmic reticulum.

It localises to the endoplasmic reticulum membrane. The protein resides in the lipid droplet. The protein operates within steroid metabolism; ergosterol biosynthesis. In terms of biological role, sterol-C4-methyl oxidase; part of the third module of ergosterol biosynthesis pathway that includes the late steps of the pathway. Erg27 is a catalytic component of the C-4 demethylation complex that catalyzes the conversion of 4,4-dimethylfecosterol into fecosterol via 4-methylfecosterol. The third module or late pathway involves the ergosterol synthesis itself through consecutive reactions that mainly occur in the endoplasmic reticulum (ER) membrane. Firstly, the squalene synthase erg9 catalyzes the condensation of 2 farnesyl pyrophosphate moieties to form squalene, which is the precursor of all steroids. Squalene synthase is crucial for balancing the incorporation of farnesyl diphosphate (FPP) into sterol and nonsterol isoprene synthesis. Secondly, squalene is converted into lanosterol by the consecutive action of the squalene epoxidase erg1 and the lanosterol synthase erg7. Then, the delta(24)-sterol C-methyltransferase erg6 methylates lanosterol at C-24 to produce eburicol. Eburicol is the substrate of the sterol 14-alpha demethylase encoded by cyp51A and cyp51B, to yield 4,4,24-trimethyl ergosta-8,14,24(28)-trienol. The C-14 reductase erg24 then reduces the C14=C15 double bond which leads to 4,4-dimethylfecosterol. A sequence of further demethylations at C-4, involving the C-4 demethylation complex containing the C-4 methylsterol oxidases erg25A or erg25B, the sterol-4-alpha-carboxylate 3-dehydrogenase erg26 and the 3-keto-steroid reductase erg27, leads to the production of fecosterol via 4-methylfecosterol. The C-8 sterol isomerase erg2 then catalyzes the reaction which results in unsaturation at C-7 in the B ring of sterols and thus converts fecosterol to episterol. The sterol-C5-desaturase erg3B then catalyzes the introduction of a C-5 double bond in the B ring to produce 5-dehydroepisterol. The 2 other sterol-C5-desaturases, erg3A and erg3C, seem to be less important in ergosterol biosynthesis. The C-22 sterol desaturase erg5 further converts 5-dehydroepisterol into ergosta-5,7,22,24(28)-tetraen-3beta-ol by forming the C-22(23) double bond in the sterol side chain. Finally, ergosta-5,7,22,24(28)-tetraen-3beta-ol is substrate of the C-24(28) sterol reductases erg4A and erg4B to produce ergosterol. Possible alternative sterol biosynthetic pathways might exist from fecosterol to ergosterol, depending on the activities of the erg3 isoforms. The protein is 3-keto-steroid reductase erg27 of Aspergillus fumigatus (strain ATCC MYA-4609 / CBS 101355 / FGSC A1100 / Af293) (Neosartorya fumigata).